A 930-amino-acid polypeptide reads, in one-letter code: Nonribosomal peptide synthetase btyA (930 aa).

The segment at 31 to 440 (ESPHRLTYAE…RGRSKELICI (410 aa)) is adenylation (A) domain. Residues 570–647 (PAGNETETLL…VLARQLQDGH (78 aa)) enclose the Carrier domain. Position 607 is an O-(pantetheine 4'-phosphoryl)serine (serine 607). A thioesterase (TE) domain region spans residues 667 to 920 (PLWLIHPIGG…EDNVHKVYRV (254 aa)).

This sequence belongs to the NRP synthetase family.

The enzyme catalyses 2 3-(4-hydroxyphenyl)pyruvate + H(+) = (2S)-2-(4-hydoxybenzyl)-3-(4-hydroxyphenyl)-2-furonol carboxylate + H2O. It functions in the pathway secondary metabolite biosynthesis. Nonribosomal peptide synthetase; part of the gene cluster that mediates the biosynthesis of butyrolactones, natural products that show a wide range of biological activities such as antitumor, antiparasitic or anti-inflammatory activity. The nonribosomal peptide synthetase btyA is responsible for the production of butyrolactone II, the core structure of butyrolactones. BtyA first activates 4-hydroxyphenylpyruvate (HPPA) through its A domain to AMP-HPPA. The HPPA unit is then loaded to the T domain and eventually transferred to the TE domain. Upon loading of another HPPA unit to the T domain, the TE domain promotes the enolate formation on the unit attached. Then aldol condensation establishes the carbon-carbon bond between the two units, followed by ester cyclization, and keto-enol tautomerization to yield the gamma-butyrolactone core. Hydrolysis, and finally esterification of the exposed carboxylic acid group yields butyrolactone II. Two additional enzymes, a prenyltransferase and an epoxidase, may be involved in the tailoring modifications of butyrolactone II to give butyrolactone III and butyrolactone I. The sequence is that of Nonribosomal peptide synthetase btyA from Aspergillus terreus (strain NIH 2624 / FGSC A1156).